A 430-amino-acid polypeptide reads, in one-letter code: ATP-dependent protease ATPase subunit HslU (430 aa).

Residues V18, 60–65 (GVGKTE), D243, E308, and R380 each bind ATP.

It belongs to the ClpX chaperone family. HslU subfamily. A double ring-shaped homohexamer of HslV is capped on each side by a ring-shaped HslU homohexamer. The assembly of the HslU/HslV complex is dependent on binding of ATP.

It localises to the cytoplasm. ATPase subunit of a proteasome-like degradation complex; this subunit has chaperone activity. The binding of ATP and its subsequent hydrolysis by HslU are essential for unfolding of protein substrates subsequently hydrolyzed by HslV. HslU recognizes the N-terminal part of its protein substrates and unfolds these before they are guided to HslV for hydrolysis. This chain is ATP-dependent protease ATPase subunit HslU, found in Caulobacter vibrioides (strain ATCC 19089 / CIP 103742 / CB 15) (Caulobacter crescentus).